Consider the following 269-residue polypeptide: Energy-coupling factor transporter ATP-binding protein EcfA1 (269 aa).

The ABC transporter domain occupies 8–242; it reads IVFKNVSFQY…AEELTRIGLD (235 aa). An ATP-binding site is contributed by 42 to 49; the sequence is GHNGSGKS.

Belongs to the ABC transporter superfamily. Energy-coupling factor EcfA family. Forms a stable energy-coupling factor (ECF) transporter complex composed of 2 membrane-embedded substrate-binding proteins (S component), 2 ATP-binding proteins (A component) and 2 transmembrane proteins (T component).

It localises to the cell membrane. Functionally, ATP-binding (A) component of a common energy-coupling factor (ECF) ABC-transporter complex. Unlike classic ABC transporters this ECF transporter provides the energy necessary to transport a number of different substrates. This is Energy-coupling factor transporter ATP-binding protein EcfA1 from Staphylococcus aureus (strain USA300).